Here is a 241-residue protein sequence, read N- to C-terminus: ATP synthase subunit 4, mitochondrial (241 aa).

A mitochondrion-targeting transit peptide spans Met-1–Tyr-35.

Belongs to the eukaryotic ATPase B chain family. As to quaternary structure, F-type ATPases have 2 components, CF(1) - the catalytic core - and CF(0) - the membrane proton channel. In yeast, the dimeric form of ATP synthase consists of 17 polypeptides: alpha, beta, gamma, delta, epsilon, 4 (B), 5 (OSCP), 6 (A), 8, 9 (C), d, E (Tim11), f, g, h, i/j and k.

It is found in the mitochondrion. Its subcellular location is the mitochondrion inner membrane. In terms of biological role, mitochondrial membrane ATP synthase (F(1)F(0) ATP synthase or Complex V) produces ATP from ADP in the presence of a proton gradient across the membrane which is generated by electron transport complexes of the respiratory chain. F-type ATPases consist of two structural domains, F(1) - containing the extramembraneous catalytic core, and F(0) - containing the membrane proton channel, linked together by a central stalk and a peripheral stalk. During catalysis, ATP synthesis in the catalytic domain of F(1) is coupled via a rotary mechanism of the central stalk subunits to proton translocation. Part of the complex F(0) domain and the peripheric stalk, which acts as a stator to hold the catalytic alpha(3)beta(3) subcomplex and subunit a/atp6 static relative to the rotary elements. This is ATP synthase subunit 4, mitochondrial (atp-3) from Neurospora crassa (strain ATCC 24698 / 74-OR23-1A / CBS 708.71 / DSM 1257 / FGSC 987).